The primary structure comprises 252 residues: Type III pantothenate kinase (252 aa).

Position 6–13 (6–13 (DIGNTTTE)) interacts with ATP. Substrate is bound by residues tyrosine 100 and 107–110 (GADR). The active-site Proton acceptor is the aspartate 109. Position 129 (aspartate 129) interacts with K(+). Position 132 (threonine 132) interacts with ATP. Threonine 184 serves as a coordination point for substrate.

It belongs to the type III pantothenate kinase family. In terms of assembly, homodimer. Requires NH4(+) as cofactor. The cofactor is K(+).

Its subcellular location is the cytoplasm. It carries out the reaction (R)-pantothenate + ATP = (R)-4'-phosphopantothenate + ADP + H(+). It functions in the pathway cofactor biosynthesis; coenzyme A biosynthesis; CoA from (R)-pantothenate: step 1/5. Its function is as follows. Catalyzes the phosphorylation of pantothenate (Pan), the first step in CoA biosynthesis. The sequence is that of Type III pantothenate kinase from Sulfurihydrogenibium sp. (strain YO3AOP1).